We begin with the raw amino-acid sequence, 404 residues long: D-galactonate dehydratase family member Ent638_1932 (404 aa).

Residues Asn37 and His122 each contribute to the substrate site. The active-site Proton donor/acceptor is Tyr159. Position 212 (Asp212) interacts with Mg(2+). His214 acts as the Proton donor/acceptor in catalysis. Positions 238 and 264 each coordinate Mg(2+). Glu264, Arg285, His314, Asp318, and Glu341 together coordinate substrate.

The protein belongs to the mandelate racemase/muconate lactonizing enzyme family. GalD subfamily. Mg(2+) is required as a cofactor.

The enzyme catalyses D-mannonate = 2-dehydro-3-deoxy-D-gluconate + H2O. Its function is as follows. Has low D-mannonate dehydratase activity (in vitro), suggesting that this is not a physiological substrate and that it has no significant role in D-mannonate degradation in vivo. Has no detectable activity with a panel of 70 other acid sugars (in vitro). This Enterobacter sp. (strain 638) protein is D-galactonate dehydratase family member Ent638_1932.